Reading from the N-terminus, the 194-residue chain is Probable thymidylate kinase (194 aa).

ATP is bound at residue 8–15 (GIDGSGKT).

The protein belongs to the thymidylate kinase family.

The catalysed reaction is dTMP + ATP = dTDP + ADP. This is Probable thymidylate kinase from Sulfolobus acidocaldarius (strain ATCC 33909 / DSM 639 / JCM 8929 / NBRC 15157 / NCIMB 11770).